The following is a 413-amino-acid chain: Hemocyanin type 2 unit e (413 aa).

Asn-17 carries an N-linked (GlcNAc...) (high mannose) asparagine glycan. His-49 contacts Cu cation. A disulfide bridge links Cys-55 with Cys-66. The 2'-(S-cysteinyl)-histidine (Cys-His) cross-link spans 67–69 (CVH). His-69 and His-78 together coordinate Cu cation. Asn-127 is a glycosylation site (N-linked (GlcNAc...) (high mannose) asparagine). 2 cysteine pairs are disulfide-bonded: Cys-179-Cys-246 and Cys-336-Cys-342. His-189, His-193, and His-220 together coordinate Cu cation.

The protein belongs to the tyrosinase family. Hemocyanin subfamily. As to quaternary structure, decamers of large identical subunits, each containing 8 globular oxygen-binding functional units. Requires Cu(2+) as cofactor. In terms of tissue distribution, hemolymph.

The protein resides in the secreted. Its subcellular location is the extracellular space. Its function is as follows. Hemocyanins are copper-containing oxygen carriers occurring freely dissolved in the hemolymph of many mollusks and arthropods. This Rapana venosa (Veined rapa whelk) protein is Hemocyanin type 2 unit e.